We begin with the raw amino-acid sequence, 347 residues long: Probable 3-hydroxyisobutyrate dehydrogenase, mitochondrial (347 aa).

Residues 1-34 constitute a mitochondrion transit peptide; sequence MAIRRAQTLLCLSKFKTNFVSGSLHRFSSSSQNS. NAD(+) contacts are provided by residues 38 to 67, 101 to 102, and threonine 134; these read QNVGFIGLGNMGFRMVNNLIRAGYKVTVHD and LP. The active site involves lysine 219. An NAD(+)-binding site is contributed by lysine 294.

This sequence belongs to the HIBADH-related family. 3-hydroxyisobutyrate dehydrogenase subfamily.

The protein localises to the mitochondrion. The catalysed reaction is 3-hydroxy-2-methylpropanoate + NAD(+) = 2-methyl-3-oxopropanoate + NADH + H(+). The protein operates within amino-acid degradation; L-valine degradation. This Arabidopsis thaliana (Mouse-ear cress) protein is Probable 3-hydroxyisobutyrate dehydrogenase, mitochondrial.